A 239-amino-acid chain; its full sequence is DNA repair protein RecO (239 aa).

Belongs to the RecO family.

In terms of biological role, involved in DNA repair and RecF pathway recombination. The protein is DNA repair protein RecO of Stenotrophomonas maltophilia (strain R551-3).